The primary structure comprises 416 residues: Secreted RxLR effector protein 25 (416 aa).

The N-terminal stretch at 1-20 is a signal peptide; that stretch reads MRSWLLLLVGLSSYFALSTS. The RxLR-dEER motif lies at 49-88; it reads RKLRAPGGDTNTLKDSGKARREKKVWKLFCRVFLQLDDEK.

The protein belongs to the RxLR effector family.

The protein localises to the secreted. It localises to the host cytoplasm. It is found in the host nucleus. Effector that partially suppresses the tobacco programmed cell death induced by cell death-inducing proteins. The protein is Secreted RxLR effector protein 25 of Plasmopara viticola (Downy mildew of grapevine).